The sequence spans 448 residues: Homogentisate 1,2-dioxygenase (448 aa).

Residue H303 is the Proton acceptor of the active site. 2 residues coordinate Fe cation: H346 and E352. Positions 361 and 382 each coordinate homogentisate. H382 is a binding site for Fe cation.

Belongs to the homogentisate dioxygenase family. In terms of assembly, hexamer; dimer of trimers. Fe cation is required as a cofactor.

It carries out the reaction homogentisate + O2 = 4-maleylacetoacetate + H(+). It functions in the pathway amino-acid degradation; L-phenylalanine degradation; acetoacetate and fumarate from L-phenylalanine: step 4/6. Functionally, involved in the catabolism of homogentisate (2,5-dihydroxyphenylacetate or 2,5-OH-PhAc), a central intermediate in the degradation of phenylalanine and tyrosine. Catalyzes the oxidative ring cleavage of the aromatic ring of homogentisate to yield maleylacetoacetate. The chain is Homogentisate 1,2-dioxygenase from Rhodopseudomonas palustris (strain BisA53).